Reading from the N-terminus, the 565-residue chain is Proline--tRNA ligase (565 aa).

Belongs to the class-II aminoacyl-tRNA synthetase family. ProS type 1 subfamily. In terms of assembly, homodimer.

It is found in the cytoplasm. It carries out the reaction tRNA(Pro) + L-proline + ATP = L-prolyl-tRNA(Pro) + AMP + diphosphate. Its function is as follows. Catalyzes the attachment of proline to tRNA(Pro) in a two-step reaction: proline is first activated by ATP to form Pro-AMP and then transferred to the acceptor end of tRNA(Pro). As ProRS can inadvertently accommodate and process non-cognate amino acids such as alanine and cysteine, to avoid such errors it has two additional distinct editing activities against alanine. One activity is designated as 'pretransfer' editing and involves the tRNA(Pro)-independent hydrolysis of activated Ala-AMP. The other activity is designated 'posttransfer' editing and involves deacylation of mischarged Ala-tRNA(Pro). The misacylated Cys-tRNA(Pro) is not edited by ProRS. This Lactobacillus gasseri (strain ATCC 33323 / DSM 20243 / BCRC 14619 / CIP 102991 / JCM 1131 / KCTC 3163 / NCIMB 11718 / NCTC 13722 / AM63) protein is Proline--tRNA ligase.